The following is a 128-amino-acid chain: Large-conductance mechanosensitive channel (128 aa).

2 helical membrane passes run 10 to 30 and 76 to 96; these read FAMRGNVVDMAVGVIIGSAFG and GLFIQNVIDFIIIAFAIFMMI.

The protein belongs to the MscL family. Homopentamer.

It is found in the cell inner membrane. In terms of biological role, channel that opens in response to stretch forces in the membrane lipid bilayer. May participate in the regulation of osmotic pressure changes within the cell. The polypeptide is Large-conductance mechanosensitive channel (Haemophilus influenzae (strain PittEE)).